We begin with the raw amino-acid sequence, 1274 residues long: Meiosis inhibitor protein 1 (1274 aa).

Expressed predominantly in testis. Weakly expressed in spleen and thymus. Expressed in the ovaries, Fallopian tubes and uterus.

Its function is as follows. Required for normal meiotic chromosome synapsis. May be involved in the formation of meiotic double-strand breaks (DSBs) in spermatocytes. The sequence is that of Meiosis inhibitor protein 1 from Homo sapiens (Human).